The chain runs to 386 residues: MKLLKSHPFLSLANSYVIDSPQPSNLNYAWNFGSLLALCLGIQIVTGVTLAMHYTPNIDLAFISVEHIMRDVNYGWMIRYLHANTASFFFLFVYLHIGRGLYYGSYKSPRALPWSIGVIILILMMATAFLGYVLPWGQMSLWGATVITNLLSAIPWIGKDLVEFIWGGFSVDNATLNRFFSLHYLLPFILAALAVMHLLALHEHGSSNPLGITANADRLYMHPYYTFKDLVTIFLFFLVLALFLFYAPNKLGHPDNYIPANPMQTPASIVPEWYLLPFYAILRSIPDKLGGVIAMFGSLLILLAMPLLDLSRVRGSAFRPLMKFFFWLLVVDFLILLWCGSQHVEEPFITLGQFATTFYFSWFLIIVPVVSVIENTLIDLATENKS.

4 helical membrane passes run 32–52, 76–98, 113–133, and 179–199; these read FGSL…TLAM, WMIR…LHIG, PWSI…LGYV, and FFSL…MHLL. Heme b-binding residues include His-82 and His-96. 2 residues coordinate heme b: His-183 and His-197. Residue His-202 coordinates a ubiquinone. Helical transmembrane passes span 225–245, 289–309, 321–341, and 348–368; these read YTFK…LFLF, LGGV…PLLD, LMKF…WCGS, and FITL…IIVP.

It belongs to the cytochrome b family. As to quaternary structure, fungal cytochrome b-c1 complex contains 10 subunits; 3 respiratory subunits, 2 core proteins and 5 low-molecular weight proteins. Cytochrome b-c1 complex is a homodimer. Heme b serves as cofactor.

The protein localises to the mitochondrion inner membrane. In terms of biological role, component of the ubiquinol-cytochrome c reductase complex (complex III or cytochrome b-c1 complex) that is part of the mitochondrial respiratory chain. The b-c1 complex mediates electron transfer from ubiquinol to cytochrome c. Contributes to the generation of a proton gradient across the mitochondrial membrane that is then used for ATP synthesis. This chain is Cytochrome b (cob), found in Rhizopus oryzae (Mucormycosis agent).